We begin with the raw amino-acid sequence, 104 residues long: Large ribosomal subunit protein eL36 (104 aa).

Belongs to the eukaryotic ribosomal protein eL36 family.

The chain is Large ribosomal subunit protein eL36 (RPL36) from Tetrahymena thermophila (strain SB210).